We begin with the raw amino-acid sequence, 224 residues long: DSGSAIVALTNDRDTSYFGEIGIGTPPQKYTVIYDTGSSVLWVPSSKEQDFIEATDETDNVFLHRRFSFWLNRNVDEEEGGELVFGGLDPNHFRGDHTYVPVTYQYYWQFGIGDVLIGDKSTGFCAPGCQAFADSGTSLLSGPTAIVTQINHAIGANSEELNVKFGLTPEQYILKGEATQCISGFTAMDATLLGPLWILGDVFMRPYHTVFDYGNLLVGFAEAA.

One can recognise a Peptidase A1 domain in the interval 1–221 (DSGSAIVALT…DYGNLLVGFA (221 aa)). The active site involves D35. A disulfide bridge links C125 with C129. The active site involves D134.

Belongs to the peptidase A1 family. As to quaternary structure, heterodimer of a light chain and a heavy chain. An intermediate form is produced first, and undergoes proteolytic processing to remove the internal plant-specific insert (PSI) and the propeptide. In terms of processing, N-glycosylated. As to expression, pistils.

It localises to the microsome membrane. The protein localises to the protein storage vacuole. It is found in the secreted. The protein resides in the cell wall. Its subcellular location is the extracellular space. It localises to the extracellular matrix. Its activity is regulated as follows. Inhibited by pepstatin. In terms of biological role, aspartic protease with a high preference for bonds between hydrophobic residues. The polypeptide is Cardosin-E (Cynara cardunculus (Cardoon)).